The sequence spans 473 residues: Cannabinoid receptor 1 (473 aa).

The Extracellular portion of the chain corresponds to 1–121; sequence MKSILDGLAD…LNPSQQLAIA (121 aa). The interval 2 to 23 is required for mitochondrial localization; that stretch reads KSILDGLADTTFRTITTDLLYV. N-linked (GlcNAc...) asparagine glycosylation is found at N78 and N84. A helical membrane pass occupies residues 122–142; sequence VLSLTLGTFTVLENLLVLCVI. The Cytoplasmic portion of the chain corresponds to 143–155; it reads LHSRSLRCRPSYH. A helical transmembrane segment spans residues 156–176; sequence FIGSLAVADLLGSVIFVYSFV. Topologically, residues 177 to 188 are extracellular; the sequence is DFHVFHRKDSPN. Residues 189-209 form a helical membrane-spanning segment; sequence VFLFKLGGVTASFTASVGSLF. Residues 210–233 lie on the Cytoplasmic side of the membrane; sequence LTAIDRYISIHRPLAYKRIVTRPK. A helical membrane pass occupies residues 234–254; sequence AVVAFCLMWTIAIVIAVLPLL. Topologically, residues 255 to 278 are extracellular; sequence GWNCKKLQSVCSDIFPLIDETYLM. The helical transmembrane segment at 279-299 threads the bilayer; the sequence is FWIGVTSVLLLFIVYAYMYIL. The Cytoplasmic portion of the chain corresponds to 300 to 345; sequence WKAHSHAVRMIQRGTQKSIIIHTSEDGKVQVTRPDQARMDIRLAKT. The helical transmembrane segment at 346–366 threads the bilayer; that stretch reads LVLILVVLIICWGPLLAIMVY. The Extracellular portion of the chain corresponds to 367–378; the sequence is DVFGKMNKLIKT. A helical transmembrane segment spans residues 379–399; sequence VFAFCSMLCLLNSTVNPIIYA. Residues 400–473 lie on the Cytoplasmic side of the membrane; sequence LRSKDLRHAF…VSTDTSAEAL (74 aa). Residue C416 is the site of S-palmitoyl cysteine attachment. Phosphoserine is present on residues S426 and S430.

Belongs to the G-protein coupled receptor 1 family. As to quaternary structure, interacts (via C-terminus) with CNRIP1. Associates with G protein alpha subunits, including G(i) alpha-1/GNAI1, G(i) alpha-3/GNAI3 and G(o)-alpha/GNAO1; palmitoylation is important for interaction with GNAI3 and GNAO1. In terms of processing, palmitoylation at Cys-416 is important for recruitment at both plasma membrane and lipid rafts and association with G protein alpha subunits. Expressed in brain neurons (at protein level). Detected throughout the striatum, cortex and hippocampus, with highest levels in the lateral striatum. In rostral brain regions, high expression levels in the dorsal lateral striatum, while in the caudal brain regions, high levels are observed in the ventral lateral striatum. Expressed in neurons. In the hypothalamus, expressed in both GABAergic and glutamatergic presynaptic terminals of POMC neurons (at protein level). Expressed in striated muscles, including skeletal muscles (gastrocnemius and rectus abdominis) and myocardium (at protein level). Expressed in the liver, with highest levels in Kupffer cells and lower levels in endothelial cells as well as hepatocytes, particularly in perivascular areas (at protein level). The hepatic expression level is up-regulated in obese mice compared to lean animals.

Its subcellular location is the cell membrane. It is found in the mitochondrion outer membrane. The protein localises to the cell projection. The protein resides in the axon. It localises to the presynapse. Its activity is regulated as follows. Hemopressin, a peptide derived from hemoglobin subunit alpha (HBA1 and/or HBA2), acts as an antagonist peptide: hemopressin-binding efficiently blocks cannabinoid receptor CNR1 and subsequent signaling. Functionally, G-protein coupled receptor for cannabinoids, including endocannabinoids (eCBs), such as N-arachidonoylethanolamide (also called anandamide or AEA) and 2-arachidonoylglycerol (2-AG). Mediates many cannabinoid-induced effects, acting, among others, on food intake, memory loss, gastrointestinal motility, catalepsy, ambulatory activity, anxiety, chronic pain. Signaling typically involves reduction in cyclic AMP. In the hypothalamus, may have a dual effect on mitochondrial respiration depending upon the agonist dose and possibly upon the cell type. Increases respiration at low doses, while decreases respiration at high doses. At high doses, CNR1 signal transduction involves G-protein alpha-i protein activation and subsequent inhibition of mitochondrial soluble adenylate cyclase, decrease in cyclic AMP concentration, inhibition of protein kinase A (PKA)-dependent phosphorylation of specific subunits of the mitochondrial electron transport system, including NDUFS2. In the hypothalamus, inhibits leptin-induced reactive oxygen species (ROS) formation and mediates cannabinoid-induced increase in SREBF1 and FASN gene expression. In response to cannabinoids, drives the release of orexigenic beta-endorphin, but not that of melanocyte-stimulating hormone alpha/alpha-MSH, from hypothalamic POMC neurons, hence promoting food intake. In the hippocampus, regulates cellular respiration and energy production in response to cannabinoids. Involved in cannabinoid-dependent depolarization-induced suppression of inhibition (DSI), a process in which depolarization of CA1 postsynaptic pyramidal neurons mobilizes eCBs, which retrogradely activate presynaptic CB1 receptors, transiently decreasing GABAergic inhibitory neurotransmission. Also reduces excitatory synaptic transmission. In superior cervical ganglions and cerebral vascular smooth muscle cells, inhibits voltage-gated Ca(2+) channels in a constitutive, as well as agonist-dependent manner. In cerebral vascular smooth muscle cells, cannabinoid-induced inhibition of voltage-gated Ca(2+) channels leads to vasodilation and decreased vascular tone. Induces leptin production in adipocytes and reduces LRP2-mediated leptin clearance in the kidney, hence participating in hyperleptinemia. In adipose tissue, CNR1 signaling leads to increased expression of SREBF1, ACACA and FASN genes. In the liver, activation by endocannabinoids leads to increased de novo lipogenesis and reduced fatty acid catabolism, associated with increased expression of SREBF1/SREBP-1, GCK, ACACA, ACACB and FASN genes. May also affect de novo cholesterol synthesis and HDL-cholesteryl ether uptake. Peripherally modulates energy metabolism. In high carbohydrate diet-induced obesity, may decrease the expression of mitochondrial dihydrolipoyl dehydrogenase/DLD in striated muscles, as well as that of selected glucose/ pyruvate metabolic enzymes, hence affecting energy expenditure through mitochondrial metabolism. In response to cannabinoid anandamide, elicits a pro-inflammatory response in macrophages, which involves NLRP3 inflammasome activation and IL1B and IL18 secretion. In macrophages infiltrating pancreatic islets, this process may participate in the progression of type-2 diabetes and associated loss of pancreatic beta-cells. This Mus musculus (Mouse) protein is Cannabinoid receptor 1 (Cnr1).